The chain runs to 308 residues: Elongation factor Ts (308 aa).

Positions 80–83 are involved in Mg(2+) ion dislocation from EF-Tu; it reads TDFV.

This sequence belongs to the EF-Ts family.

Its subcellular location is the cytoplasm. Functionally, associates with the EF-Tu.GDP complex and induces the exchange of GDP to GTP. It remains bound to the aminoacyl-tRNA.EF-Tu.GTP complex up to the GTP hydrolysis stage on the ribosome. In Rhizobium leguminosarum bv. trifolii (strain WSM2304), this protein is Elongation factor Ts.